A 275-amino-acid polypeptide reads, in one-letter code: Bis(5'-nucleosyl)-tetraphosphatase, symmetrical (275 aa).

It belongs to the Ap4A hydrolase family.

The enzyme catalyses P(1),P(4)-bis(5'-adenosyl) tetraphosphate + H2O = 2 ADP + 2 H(+). Its function is as follows. Hydrolyzes diadenosine 5',5'''-P1,P4-tetraphosphate to yield ADP. The chain is Bis(5'-nucleosyl)-tetraphosphatase, symmetrical from Photorhabdus laumondii subsp. laumondii (strain DSM 15139 / CIP 105565 / TT01) (Photorhabdus luminescens subsp. laumondii).